The sequence spans 721 residues: Probable acyl-activating enzyme 17, peroxisomal (721 aa).

The Microbody targeting signal motif lies at serine 719–leucine 721.

Belongs to the ATP-dependent AMP-binding enzyme family. Expressed in leaves, stems and developing seeds.

The protein localises to the peroxisome. Its function is as follows. May act as an acid--thiol ligase that activates carboxylic acids by forming acyl-CoAs. This chain is Probable acyl-activating enzyme 17, peroxisomal (AAE17), found in Arabidopsis thaliana (Mouse-ear cress).